We begin with the raw amino-acid sequence, 904 residues long: Pantothenate kinase 2 (904 aa).

The disordered stretch occupies residues 1–56 (MAANNNSDPILDEGGGGGVKHEAVGEAGEGKGGGGGAAATQAPAAMLPRSGSRPQL). Positions 1–472 (MAANNNSDPI…LGDLNEKISW (472 aa)) are pantothenate kinase. Residues 473–904 (MEKFVQKGTQ…DCICKFEPVP (432 aa)) form a 4'-phosphopantetheine phosphatase region. Residues Asp735, Asn736, and Asp771 each contribute to the Mn(2+) site. The short motif at 855-859 (EGMGR) is the Subfamily II EGMGR motif element.

It in the N-terminal section; belongs to the type II pantothenate kinase family. In the C-terminal section; belongs to the damage-control phosphatase family. Phosphopantetheine phosphatase II subfamily. It depends on Mn(2+) as a cofactor. The cofactor is Ni(2+).

It carries out the reaction (R)-pantothenate + ATP = (R)-4'-phosphopantothenate + ADP + H(+). The catalysed reaction is (R)-4'-phosphopantothenate + H2O = (R)-pantothenate + phosphate. The enzyme catalyses (R)-4'-phosphopantetheine + H2O = (R)-pantetheine + phosphate. It catalyses the reaction (R)-4'-phosphopantetheine sulfonate + H2O = (R)-pantetheine sulfonate + phosphate. The protein operates within cofactor biosynthesis; coenzyme A biosynthesis; CoA from (R)-pantothenate: step 1/5. Catalyzes the phosphorylation of pantothenate the first step in CoA biosynthesis. May play a role in the physiological regulation of the intracellular CoA concentration. Functionally redudant with PANK1. The phosphatase activity shows preference for normal or oxidatively damaged intermediates of 4'-phosphopantetheine, which provides strong indirect evidence that the phosphatase activity pre-empts damage in the CoA pathway. Hydrolyzing excess 4'-phosphopantetheine could constitute a directed overflow mechanism to prevent its oxidation to the S-sulfonate, sulfonate, or other forms. Hydrolyzing 4'-phosphopantetheine sulfonate or S-sulfonate would forestall their conversion to inactive forms of CoA and acyl carrier protein. In Oryza sativa subsp. japonica (Rice), this protein is Pantothenate kinase 2.